The sequence spans 118 residues: Small ribosomal subunit protein uS13 (118 aa).

The interval 92 to 118 is disordered; sequence RRSLPVRGQRTKTNARTRKGPRKPIKK.

The protein belongs to the universal ribosomal protein uS13 family. Part of the 30S ribosomal subunit. Forms a loose heterodimer with protein S19. Forms two bridges to the 50S subunit in the 70S ribosome.

Its function is as follows. Located at the top of the head of the 30S subunit, it contacts several helices of the 16S rRNA. In the 70S ribosome it contacts the 23S rRNA (bridge B1a) and protein L5 of the 50S subunit (bridge B1b), connecting the 2 subunits; these bridges are implicated in subunit movement. Contacts the tRNAs in the A and P-sites. This Acinetobacter baumannii (strain AB307-0294) protein is Small ribosomal subunit protein uS13.